A 2301-amino-acid chain; its full sequence is Genome polyprotein (2301 aa).

A zinc finger spans residues 3 to 14 (CKHGYPDVCPIC). An acidic region spans residues 30–46 (DGEWFPTDLLCVDLDDD). The theilo stretch occupies residues 60-73 (MEWTDLPLVRDIVM). Glycine 77 is lipidated: N-myristoyl glycine; by host. The cysteines at positions 501 and 503 are disulfide-linked. Positions 1039–1045 (YYKQRLI) are host EIF4E binding. The region spanning 1281 to 1446 (IPLASLCEKF…CTTSNGMLDI (166 aa)) is the SF3 helicase domain. 1310–1317 (GAAGQGKS) contacts ATP. Position 1606 is an O-(5'-phospho-RNA)-tyrosine (tyrosine 1606). The Peptidase C3 domain maps to 1634–1827 (NPVMDFELFC…AATIITRELI (194 aa)). Residues histidine 1678, aspartate 1712, and cysteine 1791 each act as for protease 3C activity in the active site. The RdRp catalytic domain occupies 2069–2187 (NYVYDVDYSN…GTNYQIDFNL (119 aa)). Catalysis depends on for RdRp activity residues aspartate 2075 and aspartate 2173.

It belongs to the picornaviruses polyprotein family. In terms of assembly, interacts with host EIF4E. Interacts with the leader protein. Interacts with host RAN; the complex L-RAN recruits cellular kinases responsible for the L-induced nucleocytoplasmic trafficking inhibition. The complex L-RAN can further bind to the host exportins XPO1/CRM1 and CSE1L/CAS. Interacts with the protein 2A. Interacts with host RNASEL; this interaction prevents RNASEL activation by its substrate 2'-5' oligoadenylates. In terms of processing, phosphorylated. Post-translationally, specific enzymatic cleavages by the viral protease in vivo yield a variety of precursors and mature proteins. The polyprotein seems to be cotranslationally cleaved at the 2A/2B junction by a ribosomal skip from one codon to the next without formation of a peptide bond. This process would release the P1-2A peptide from the translational complex. During virion maturation, immature virions are rendered infectious following cleavage of VP0 into VP4 and VP2. This maturation seems to be an autocatalytic event triggered by the presence of RNA in the capsid and is followed by a conformational change of the particle. In terms of processing, uridylylated by the polymerase and is covalently linked to the 5'-end of genomic RNA. This uridylylated form acts as a nucleotide-peptide primer for the polymerase. Post-translationally, myristoylation is required during RNA encapsidation and formation of the mature virus particle.

It localises to the virion. Its subcellular location is the host cytoplasm. The protein localises to the host nucleus. It is found in the host nucleolus. The protein resides in the host cytoplasmic vesicle membrane. It catalyses the reaction RNA(n) + a ribonucleoside 5'-triphosphate = RNA(n+1) + diphosphate. The catalysed reaction is ATP + H2O = ADP + phosphate + H(+). The enzyme catalyses Selective cleavage of Gln-|-Gly bond in the poliovirus polyprotein. In other picornavirus reactions Glu may be substituted for Gln, and Ser or Thr for Gly.. Functionally, forms a complex with host RAN and probably binds to exportins carrying activated MAPK in order to mediate the hyperphosphorylation of host Phe/Gly containing nuclear pore proteins (Nups) resulting in cessation of active nucleocytoplasmic transport. Proteins with NLS signals fail to import, cellular mRNAs fail to export, and some proteins small enough for diffusion are not retained anymore (efflux). The resulting inhibition of cellular protein synthesis serves to ensure maximal viral gene expression and to evade host immune response. The leader protein also inhibits host interferon regulatory factor 3 (IRF3) dimerization, thereby blocking the transcriptional activation of IFN genes. Binds to host RNase L thereby preventing its activation by 2'-5' oligoadenylates in order to counteract the antiviral interferon-inducible OAS/RNase L pathway. In terms of biological role, forms an icosahedral capsid of pseudo T=3 symmetry with capsid proteins VP2 and VP3. Together they form an icosahedral capsid composed of 60 copies of each VP1, VP2, and VP3, with a diameter of approximately 300 Angstroms. VP4 lies on the inner surface of the protein shell formed by VP1, VP2 and VP3. All the three latter proteins contain a beta-sheet structure called beta-barrel jelly roll. VP1 is situated at the 12 fivefold axes, whereas VP2 and VP3 are located at the quasi-sixfold axes. Its function is as follows. Lies on the inner surface of the capsid shell. After binding to the host receptor, the capsid undergoes conformational changes. Capsid protein VP4 is released, capsid protein VP1 N-terminus is externalized, and together, they shape a pore in the host membrane through which the viral genome is translocated into the host cell cytoplasm. After genome has been released, the channel shrinks. VP0 precursor is a component of immature procapsids. Functionally, involved in host translation shutoff by inhibiting cap-dependent mRNA translation. Nuclear localization is required for this function. The resulting inhibition of cellular protein synthesis serves to ensure maximal viral gene expression and to evade host immune response. Inhibits the phosphorylation of the leader protein. In terms of biological role, affects membrane integrity and causes an increase in membrane permeability. Its function is as follows. Associates with and induces structural rearrangements of intracellular membranes. It displays RNA-binding, nucleotide binding and NTPase activities. Serves as membrane anchor via its hydrophobic domain. Functionally, forms a primer, VPg-pU, which is utilized by the polymerase for the initiation of RNA chains. In terms of biological role, cysteine protease that generates mature viral proteins from the precursor polyprotein. In addition to its proteolytic activity, it binds to viral RNA, and thus influences viral genome replication. RNA and substrate cooperatively bind to the protease. Cleaves host PABP1, this cleavage is important for viral replication. Its function is as follows. Replicates the genomic and antigenomic RNAs by recognizing replications specific signals. Performs VPg uridylylation. The sequence is that of Genome polyprotein from Theiler's murine encephalomyelitis virus (strain DA) (TMEV).